The sequence spans 460 residues: Hydroxyproline dehydrogenase (460 aa).

K310 bears the N6-acetyllysine mark.

This sequence belongs to the proline oxidase family. Requires FAD as cofactor.

It carries out the reaction trans-4-hydroxy-L-proline + a quinone = (3R,5S)-1-pyrroline-3-hydroxy-5-carboxylate + a quinol + H(+). The enzyme catalyses L-proline + a quinone = (S)-1-pyrroline-5-carboxylate + a quinol + H(+). Hydroproxyproline dehydrogenase activity is inhibited by THFA,(1R,3R)3-OH-cyclopentane-COOH and 5-OH-1H-pyrazole-3-COOH. In terms of biological role, dehydrogenase that converts trans-4-L-hydroxyproline to delta-1-pyrroline-3-hydroxy-5-carboxylate (Hyp) using ubiquinone-10 as the terminal electron acceptor. Can also use proline as a substrate but with a very much lower efficiency. Does not react with other diastereomers of Hyp: trans-4-D-hydroxyproline and cis-4-L-hydroxyproline. Ubiquininone analogs such as menadione, duroquinone and ubiquinone-1 react more efficiently than oxygen as the terminal electron acceptor during catalysis. The chain is Hydroxyproline dehydrogenase from Homo sapiens (Human).